The chain runs to 375 residues: Protein MGF 360-5L (375 aa).

It belongs to the asfivirus MGF 360 family.

In terms of biological role, plays a role in virus cell tropism, and may be required for efficient virus replication in macrophages. The protein is Protein MGF 360-5L of African swine fever virus (isolate Portugal/Lis 57/1957) (ASFV).